The sequence spans 133 residues: p53 and DNA damage-regulated protein 1 (133 aa).

It belongs to the prefoldin subunit beta family. As to quaternary structure, component of the PAQosome complex which is responsible for the biogenesis of several protein complexes and which consists of R2TP complex members RUVBL1, RUVBL2, RPAP3 and PIH1D1, URI complex members PFDN2, PFDN6, PDRG1, UXT and URI1 as well as ASDURF, POLR2E and DNAAF10/WDR92.

It is found in the cytoplasm. May play a role in chaperone-mediated protein folding. The sequence is that of p53 and DNA damage-regulated protein 1 (Pdrg1) from Mus musculus (Mouse).